The chain runs to 164 residues: Crossover junction endodeoxyribonuclease RuvC (164 aa).

Active-site residues include Asp-7, Glu-67, and Asp-140. Mg(2+) is bound by residues Asp-7, Glu-67, and Asp-140.

The protein belongs to the RuvC family. In terms of assembly, homodimer which binds Holliday junction (HJ) DNA. The HJ becomes 2-fold symmetrical on binding to RuvC with unstacked arms; it has a different conformation from HJ DNA in complex with RuvA. In the full resolvosome a probable DNA-RuvA(4)-RuvB(12)-RuvC(2) complex forms which resolves the HJ. The cofactor is Mg(2+).

It localises to the cytoplasm. It carries out the reaction Endonucleolytic cleavage at a junction such as a reciprocal single-stranded crossover between two homologous DNA duplexes (Holliday junction).. The RuvA-RuvB-RuvC complex processes Holliday junction (HJ) DNA during genetic recombination and DNA repair. Endonuclease that resolves HJ intermediates. Cleaves cruciform DNA by making single-stranded nicks across the HJ at symmetrical positions within the homologous arms, yielding a 5'-phosphate and a 3'-hydroxyl group; requires a central core of homology in the junction. The consensus cleavage sequence is 5'-(A/T)TT(C/G)-3'. Cleavage occurs on the 3'-side of the TT dinucleotide at the point of strand exchange. HJ branch migration catalyzed by RuvA-RuvB allows RuvC to scan DNA until it finds its consensus sequence, where it cleaves and resolves the cruciform DNA. In Chloroflexus aggregans (strain MD-66 / DSM 9485), this protein is Crossover junction endodeoxyribonuclease RuvC.